The chain runs to 452 residues: GTPase Der (452 aa).

EngA-type G domains lie at 9-170 (KIIA…PEED) and 185-362 (LQIV…KTWN). GTP is bound by residues 15 to 22 (GRPNVGKS), 62 to 66 (DTPGL), 124 to 127 (NKCE), 191 to 198 (GRPNAGKS), 238 to 242 (DTAGL), and 303 to 306 (NKWD). One can recognise a KH-like domain in the interval 363 to 448 (KKITTSKLNE…PIRFNYIKTK (86 aa)).

The protein belongs to the TRAFAC class TrmE-Era-EngA-EngB-Septin-like GTPase superfamily. EngA (Der) GTPase family. In terms of assembly, associates with the 50S ribosomal subunit.

Functionally, GTPase that plays an essential role in the late steps of ribosome biogenesis. This chain is GTPase Der, found in Rickettsia bellii (strain RML369-C).